A 306-amino-acid polypeptide reads, in one-letter code: D-alanine--D-alanine ligase B (306 aa).

Catalysis depends on residues E15 and S150. The region spanning K101 to E303 is the ATP-grasp domain. An ATP-binding site is contributed by I134 to T189. Residues D257, E270, and N272 each coordinate Mg(2+). S281 is an active-site residue.

Belongs to the D-alanine--D-alanine ligase family. Monomer. Requires Mg(2+) as cofactor. Mn(2+) is required as a cofactor.

It localises to the cytoplasm. It catalyses the reaction 2 D-alanine + ATP = D-alanyl-D-alanine + ADP + phosphate + H(+). Its pathway is cell wall biogenesis; peptidoglycan biosynthesis. Cell wall formation. This chain is D-alanine--D-alanine ligase B (ddlB), found in Escherichia coli (strain K12).